A 555-amino-acid chain; its full sequence is GPI-anchor transamidase component PIGS (555 aa).

The Cytoplasmic portion of the chain corresponds to 2–18 (AATGAAATDLEVVRGKR). A cardiolipin-binding residues include Arg15 and Arg18. A helical transmembrane segment spans residues 19-39 (AALFFATVVIVLGLPLWWKTT). The Lumenal segment spans residues 40–517 (ETYRAPLPYS…LHLLYFPDDQ (478 aa)). Asn267 and Asn370 each carry an N-linked (GlcNAc...) asparagine glycan. A helical transmembrane segment spans residues 518–532 (KFAIYIPLFLPMAVP). Residues 533-555 (ILLSLFKIFLETRKSWKKPEKTD) are Cytoplasmic-facing.

It belongs to the PIGS family. As to quaternary structure, heteropentamer. Part of the GPI-anchor transamidase complex, consisting of PIGK, PIGT, PIGS, PIGU and GAA1.

It is found in the endoplasmic reticulum membrane. It functions in the pathway glycolipid biosynthesis; glycosylphosphatidylinositol-anchor biosynthesis. In terms of biological role, component of the glycosylphosphatidylinositol-anchor (GPI-anchor) transamidase (GPI-T) complex that catalyzes the formation of the linkage between a proprotein and a GPI-anchor and participates in GPI anchored protein biosynthesis. The protein is GPI-anchor transamidase component PIGS of Bos taurus (Bovine).